A 121-amino-acid polypeptide reads, in one-letter code: Small ribosomal subunit protein uS13 (121 aa).

The interval R92–K121 is disordered.

The protein belongs to the universal ribosomal protein uS13 family. As to quaternary structure, part of the 30S ribosomal subunit. Forms a loose heterodimer with protein S19. Forms two bridges to the 50S subunit in the 70S ribosome.

Located at the top of the head of the 30S subunit, it contacts several helices of the 16S rRNA. In the 70S ribosome it contacts the 23S rRNA (bridge B1a) and protein L5 of the 50S subunit (bridge B1b), connecting the 2 subunits; these bridges are implicated in subunit movement. Contacts the tRNAs in the A and P-sites. This is Small ribosomal subunit protein uS13 from Janthinobacterium sp. (strain Marseille) (Minibacterium massiliensis).